The sequence spans 445 residues: Xylose isomerase (445 aa).

Catalysis depends on residues histidine 107 and aspartate 110. Positions 238, 274, 277, 302, 313, 315, and 345 each coordinate Mg(2+).

The protein belongs to the xylose isomerase family. As to quaternary structure, homotetramer. Mg(2+) is required as a cofactor.

The protein resides in the cytoplasm. It catalyses the reaction alpha-D-xylose = alpha-D-xylulofuranose. This is Xylose isomerase from Bacillus pumilus (strain SAFR-032).